The chain runs to 51 residues: Large ribosomal subunit protein bL33 (51 aa).

The tract at residues 1 to 21 (MRDKIKLESGAGTGHFYTTTK) is disordered.

It belongs to the bacterial ribosomal protein bL33 family.

This is Large ribosomal subunit protein bL33 from Neisseria gonorrhoeae (strain ATCC 700825 / FA 1090).